The chain runs to 112 residues: uncharacterized protein (112 aa).

A helical membrane pass occupies residues 89–106 (TLYVLVIVGLTILCFLLV).

This sequence belongs to the IIV-6 466R family.

It is found in the membrane. This is an uncharacterized protein from Aedes vexans (Inland floodwater mosquito).